We begin with the raw amino-acid sequence, 256 residues long: Trans-aconitate 2-methyltransferase (256 aa).

This sequence belongs to the methyltransferase superfamily. Tam family.

Its subcellular location is the cytoplasm. The enzyme catalyses trans-aconitate + S-adenosyl-L-methionine = (E)-3-(methoxycarbonyl)pent-2-enedioate + S-adenosyl-L-homocysteine. Its function is as follows. Catalyzes the S-adenosylmethionine monomethyl esterification of trans-aconitate. The polypeptide is Trans-aconitate 2-methyltransferase (Rhodopseudomonas palustris (strain BisA53)).